The sequence spans 226 residues: MGDDLVKVKICGITNEEDIAYISKKVHAVGVIVDVPVKTPRKISLDKAIELKKYVAPFTSLVTVLMPNSIEEVLEIYNALKPNAIQLHGFESLDFVKELNKLKNTGELNAHIIKVIHIPKDEEIDFKTLLNTAKEYEKYVEAILVDTKIESIKLEGKTHNWAVSKKLRESLEKPLILAGGLNKDNVLEAIKTVKPYAIDVSSSLEAYGGKKDLKKVDEFLEVIKKV.

It belongs to the TrpF family.

It carries out the reaction N-(5-phospho-beta-D-ribosyl)anthranilate = 1-(2-carboxyphenylamino)-1-deoxy-D-ribulose 5-phosphate. Its pathway is amino-acid biosynthesis; L-tryptophan biosynthesis; L-tryptophan from chorismate: step 3/5. In Methanocaldococcus jannaschii (strain ATCC 43067 / DSM 2661 / JAL-1 / JCM 10045 / NBRC 100440) (Methanococcus jannaschii), this protein is N-(5'-phosphoribosyl)anthranilate isomerase (trpF).